The sequence spans 304 residues: Dihydroorotate dehydrogenase B (NAD(+)), catalytic subunit (304 aa).

Residues serine 21 and lysine 45–alanine 46 contribute to the FMN site. Substrate contacts are provided by residues lysine 45 and asparagine 69–leucine 73. FMN contacts are provided by asparagine 99 and asparagine 127. A substrate-binding site is contributed by asparagine 127. Residue cysteine 130 is the Nucleophile of the active site. FMN is bound by residues lysine 165 and isoleucine 191. Asparagine 192–threonine 193 contributes to the substrate binding site. FMN contacts are provided by residues glycine 217, glycine 243–glycine 244, and glycine 265–threonine 266.

It belongs to the dihydroorotate dehydrogenase family. Type 1 subfamily. In terms of assembly, heterotetramer of 2 PyrK and 2 PyrD type B subunits. Requires FMN as cofactor.

It is found in the cytoplasm. It carries out the reaction (S)-dihydroorotate + NAD(+) = orotate + NADH + H(+). The protein operates within pyrimidine metabolism; UMP biosynthesis via de novo pathway; orotate from (S)-dihydroorotate (NAD(+) route): step 1/1. In terms of biological role, catalyzes the conversion of dihydroorotate to orotate with NAD(+) as electron acceptor. The sequence is that of Dihydroorotate dehydrogenase B (NAD(+)), catalytic subunit (pyrD) from Listeria welshimeri serovar 6b (strain ATCC 35897 / DSM 20650 / CCUG 15529 / CIP 8149 / NCTC 11857 / SLCC 5334 / V8).